Reading from the N-terminus, the 336-residue chain is Phosphoribosylformylglycinamidine cyclo-ligase (336 aa).

The protein belongs to the AIR synthase family.

Its subcellular location is the cytoplasm. The enzyme catalyses 2-formamido-N(1)-(5-O-phospho-beta-D-ribosyl)acetamidine + ATP = 5-amino-1-(5-phospho-beta-D-ribosyl)imidazole + ADP + phosphate + H(+). The protein operates within purine metabolism; IMP biosynthesis via de novo pathway; 5-amino-1-(5-phospho-D-ribosyl)imidazole from N(2)-formyl-N(1)-(5-phospho-D-ribosyl)glycinamide: step 2/2. The sequence is that of Phosphoribosylformylglycinamidine cyclo-ligase from Thermoanaerobacter pseudethanolicus (strain ATCC 33223 / 39E) (Clostridium thermohydrosulfuricum).